Here is a 412-residue protein sequence, read N- to C-terminus: Aspartate aminotransferase, cytoplasmic (412 aa).

N-acetylalanine is present on alanine 2. 3 residues coordinate L-aspartate: glycine 38, tryptophan 140, and asparagine 194. Lysine 258 is modified (N6-(pyridoxal phosphate)lysine). Arginine 386 lines the L-aspartate pocket.

This sequence belongs to the class-I pyridoxal-phosphate-dependent aminotransferase family. Homodimer. Pyridoxal 5'-phosphate serves as cofactor.

Its subcellular location is the cytoplasm. The catalysed reaction is L-aspartate + 2-oxoglutarate = oxaloacetate + L-glutamate. The enzyme catalyses L-cysteine + 2-oxoglutarate = 2-oxo-3-sulfanylpropanoate + L-glutamate. It carries out the reaction (2S)-2-aminobutanoate + 2-oxoglutarate = 2-oxobutanoate + L-glutamate. It catalyses the reaction 3-sulfino-L-alanine + 2-oxoglutarate = 3-sulfinopyruvate + L-glutamate. Biosynthesis of L-glutamate from L-aspartate or L-cysteine. Important regulator of levels of glutamate, the major excitatory neurotransmitter of the vertebrate central nervous system. Acts as a scavenger of glutamate in brain neuroprotection. The aspartate aminotransferase activity is involved in hepatic glucose synthesis during development and in adipocyte glyceroneogenesis. Using L-cysteine as substrate, regulates levels of mercaptopyruvate, an important source of hydrogen sulfide. Mercaptopyruvate is converted into H(2)S via the action of 3-mercaptopyruvate sulfurtransferase (3MST). Hydrogen sulfide is an important synaptic modulator and neuroprotectant in the brain. This is Aspartate aminotransferase, cytoplasmic from Gallus gallus (Chicken).